Reading from the N-terminus, the 320-residue chain is Putative GDP-polyphosphate phosphotransferase PKK2A (320 aa).

3 disordered regions span residues 1–21 (MRKKKDGQNLPDFRKNPPKLD), 246–267 (RPLPEIPHRPDSESDYVRPPRD), and 281–320 (EERIKKEEKAKKAKKPAKAAGKNSDKQKSSGGKGKKKSKK). Basic and acidic residues predominate over residues 12–21 (DFRKNPPKLD). Basic and acidic residues predominate over residues 281 to 290 (EERIKKEEKA).

Belongs to the polyphosphate kinase 2 (PPK2) family. Class I subfamily.

It catalyses the reaction [phosphate](n) + GTP = [phosphate](n+1) + GDP. This chain is Putative GDP-polyphosphate phosphotransferase PKK2A, found in Corynebacterium glutamicum (strain ATCC 13032 / DSM 20300 / JCM 1318 / BCRC 11384 / CCUG 27702 / LMG 3730 / NBRC 12168 / NCIMB 10025 / NRRL B-2784 / 534).